Here is a 163-residue protein sequence, read N- to C-terminus: Nucleotide-binding protein MUL_0671 (163 aa).

It belongs to the YajQ family.

Nucleotide-binding protein. The chain is Nucleotide-binding protein MUL_0671 from Mycobacterium ulcerans (strain Agy99).